We begin with the raw amino-acid sequence, 232 residues long: DOA4-independent degradation protein 4 (232 aa).

The stretch at 14–97 forms a coiled coil; the sequence is PQERLKKNQR…AISLRIQAVR (84 aa). The interaction with VPS4 stretch occupies residues 183–232; sequence LQSTPQNLVSNAPIAETAMGIPEPIGAGSEFHGNPDDDLQARLNTLKKQT. The disordered stretch occupies residues 203 to 232; it reads IPEPIGAGSEFHGNPDDDLQARLNTLKKQT. The MIT-interacting motif motif lies at 219–229; that stretch reads DDLQARLNTLK.

It belongs to the SNF7 family. In terms of assembly, core component of the ESCRT-III complex (endosomal sorting required for transport complex III). ESCRT-III appears to be sequentially assembled as a flat lattice on the endosome membrane and forms a transient 450 kDa complex that contains DID4, oligomerized SNF7, VPS20 and VPS24. SNF7 oligomerization into a membrane-associated filament is nucleated by association of SNF7 with VPS20; the process is terminated through association of VPS24, possibly by capping the SNF7 filament. VPS24 subsequently associates with DID4/VPS2.

The protein localises to the cytoplasm. It localises to the endosome membrane. Required for the sorting and concentration of proteins resulting in the entry of these proteins into the invaginating vesicles of the multivesicular body (MVB). Acts a component of the ESCRT-III complex, which appears to be critical for late steps in MVB sorting, such as membrane invagination and final cargo sorting and recruitment of late-acting components of the sorting machinery. The MVB pathway requires the sequential function of ESCRT-O, -I,-II and -III complex assemblies. Can directly stimulate VPS4 ATPase activity. The DID4/VPS2-VPS24 subcomplex is required for the VPS4-dependent dissociation of ESCRT-III. This Saccharomyces cerevisiae (strain ATCC 204508 / S288c) (Baker's yeast) protein is DOA4-independent degradation protein 4 (DID4).